The sequence spans 1161 residues: Mitogen-activated protein kinase kinase kinase (1161 aa).

The 65-residue stretch at 56–120 folds into the SH3 domain; it reads GDGSLWTALY…PKDFVTDEDP (65 aa). The region spanning 142-402 is the Protein kinase domain; it reads LDIKEVIGSG…KEILKQLESI (261 aa). ATP-binding positions include 148-156 and lysine 169; that span reads IGSGGFCKV. The Proton acceptor role is filled by aspartate 264. A Phosphothreonine; by autocatalysis modification is found at threonine 300. Serine 304 carries the post-translational modification Phosphoserine; by autocatalysis. Leucine-zipper regions lie at residues 426–447 and 461–482; these read IAGV…EEQL and LKIR…ELVM. Phosphoserine occurs at positions 525 and 560. 2 disordered regions span residues 560–615 and 658–678; these read SQLS…GSGG and TTNN…NQLN. A compositionally biased stretch (polar residues) spans 571 to 583; that stretch reads AQTSTHSSFSKSA. The segment covering 591–601 has biased composition (low complexity); sequence QQQNQQQVASL. 3 positions are modified to phosphoserine: serine 685, serine 773, and serine 792. The interval 790–830 is disordered; that stretch reads GNSPAVGRKKHSLDSSSHHPPANGSNSFALPNQLTLPSEDN. A compositionally biased stretch (polar residues) spans 812–830; sequence NGSNSFALPNQLTLPSEDN. Threonine 862 carries the phosphothreonine modification. 3 disordered regions span residues 988–1014, 1045–1093, and 1137–1161; these read RSAS…EAVN, EQRQ…SAGS, and GGSS…LERC. Low complexity predominate over residues 989–1010; the sequence is SASPSLSSSSTTASASPSIAST. Phosphoserine is present on serine 993. Residues 1052 to 1063 show a composition bias toward basic residues; it reads NQKKQRPKHITK. Residues 1073 to 1086 are compositionally biased toward basic and acidic residues; sequence GQHHEHDDHNDPQH. Polar residues predominate over residues 1150 to 1161; it reads PQTQSCEQLERC.

This sequence belongs to the protein kinase superfamily. STE Ser/Thr protein kinase family. MAP kinase kinase kinase subfamily. As to quaternary structure, homodimer. The cofactor is Mg(2+). Post-translationally, autophosphorylation on serine and threonine residues within the activation loop plays a role in enzyme activation. As to expression, expressed both maternally and zygotically. Expressed uniformly in large quantities in the early embryo (stages 1-4). In the late embryo, expression is ubiquitous, but expression levels are dramatically reduced. Expressed in the adult head and thorax, and in S2 cells.

It carries out the reaction L-seryl-[protein] + ATP = O-phospho-L-seryl-[protein] + ADP + H(+). The enzyme catalyses L-threonyl-[protein] + ATP = O-phospho-L-threonyl-[protein] + ADP + H(+). Homodimerization via the leucine zipper domains is required for autophosphorylation and subsequent activation. Activated by C6-ceramide. Its function is as follows. Activates the JUN N-terminal pathway during dorsal closure. The polypeptide is Mitogen-activated protein kinase kinase kinase (Drosophila melanogaster (Fruit fly)).